A 173-amino-acid polypeptide reads, in one-letter code: Peptide deformylase (173 aa).

The Fe cation site is built by C91 and H133. E134 is a catalytic residue. H137 is a binding site for Fe cation.

Belongs to the polypeptide deformylase family. Fe(2+) is required as a cofactor.

The enzyme catalyses N-terminal N-formyl-L-methionyl-[peptide] + H2O = N-terminal L-methionyl-[peptide] + formate. Functionally, removes the formyl group from the N-terminal Met of newly synthesized proteins. Requires at least a dipeptide for an efficient rate of reaction. N-terminal L-methionine is a prerequisite for activity but the enzyme has broad specificity at other positions. This is Peptide deformylase from Blochmanniella pennsylvanica (strain BPEN).